The following is a 355-amino-acid chain: MFTLSDFDFNLPPELIAQTALPDRTASRLLEVDGTVAPARLVDRHFTELPSCISAGDLLVFNDTKVLKARFFGQKASGGKIEVLIERVTGTHTALAQIRASKSPGAGTTLRLADAFDVTVGERVDPFFTLNFPEPCLDLIEQYGRLPLPPYIEHDPDATDETRYQTVYASNPGAVAAPTAGLHFDQPMLDRLDAMGVERATLTLHVGAGTFQPVRVDNIAEHKMHSEWYDLPQSLVDKIAATRARGGNVIAVGTTSMRALEAAARAADEAGRPLAATQAETDIFITPGYRFRVVDRLVTNFHLPKSTLLMLVSAFAGVETIRAAYRHAIEQRYRFFSYGDAMLLTRRDTPEAPLA.

The protein belongs to the QueA family. In terms of assembly, monomer.

It localises to the cytoplasm. It catalyses the reaction 7-aminomethyl-7-carbaguanosine(34) in tRNA + S-adenosyl-L-methionine = epoxyqueuosine(34) in tRNA + adenine + L-methionine + 2 H(+). It participates in tRNA modification; tRNA-queuosine biosynthesis. Functionally, transfers and isomerizes the ribose moiety from AdoMet to the 7-aminomethyl group of 7-deazaguanine (preQ1-tRNA) to give epoxyqueuosine (oQ-tRNA). The protein is S-adenosylmethionine:tRNA ribosyltransferase-isomerase of Burkholderia lata (strain ATCC 17760 / DSM 23089 / LMG 22485 / NCIMB 9086 / R18194 / 383).